The primary structure comprises 866 residues: Replication factor C small subunit (866 aa).

A DOD-type homing endonuclease domain is found at 183–313 (WLGYFIGDGH…VTYALAGFGI (131 aa)).

The protein belongs to the activator 1 small subunits family. RfcS subfamily. Heteromultimer composed of small subunits (RfcS) and large subunits (RfcL). This protein undergoes a protein self splicing that involves a post-translational excision of the intervening region (intein) followed by peptide ligation.

Its function is as follows. Part of the RFC clamp loader complex which loads the PCNA sliding clamp onto DNA. This Thermococcus kodakarensis (strain ATCC BAA-918 / JCM 12380 / KOD1) (Pyrococcus kodakaraensis (strain KOD1)) protein is Replication factor C small subunit (rfcS).